Here is a 270-residue protein sequence, read N- to C-terminus: ATP phosphoribosyltransferase regulatory subunit (270 aa).

This sequence belongs to the class-II aminoacyl-tRNA synthetase family. HisZ subfamily. In terms of assembly, heteromultimer composed of HisG and HisZ subunits.

It is found in the cytoplasm. Its pathway is amino-acid biosynthesis; L-histidine biosynthesis; L-histidine from 5-phospho-alpha-D-ribose 1-diphosphate: step 1/9. In terms of biological role, required for the first step of histidine biosynthesis. May allow the feedback regulation of ATP phosphoribosyltransferase activity by histidine. This Staphylococcus epidermidis (strain ATCC 12228 / FDA PCI 1200) protein is ATP phosphoribosyltransferase regulatory subunit (hisZ).